The primary structure comprises 964 residues: E3 ubiquitin-protein ligase TRIM37 (964 aa).

Position 1 is an N-acetylmethionine (M1). The RING-type; degenerate zinc finger occupies 15-55 (CFICMEKLRDARLCPHCSKLCCFSCIRRWLTEQRAQCPHCR). The B box-type zinc finger occupies 90-132 (NEKDKCENHHEKLSVFCWTCKKCICHQCALWGGMHGGHTFKPL). 4 residues coordinate Zn(2+): C95, H98, C117, and H124. The stretch at 132–234 (LAEIYEQHVT…VEHQLRSCSK (103 aa)) forms a coiled coil. The 128-residue stretch at 276–403 (YDSATFVLEN…NDTVILRFQV (128 aa)) folds into the MATH domain. Positions 419-450 (ITQLEAAQTSYIQQINNLKERLTIELSRTQKS) form a coiled coil. Position 454 is a phosphoserine (S454). 3 disordered regions span residues 477 to 513 (CSDM…HHEL), 530 to 554 (QLDG…IDEE), and 640 to 663 (RPPA…RKQQ). Residues 503–513 (KIQNEDYHHEL) are compositionally biased toward basic and acidic residues. Residues 534-544 (SSSSASSTATS) are compositionally biased toward low complexity. Positions 673-700 (KMLKRLKTQMAEVRCMKTDVKNTLSEIK) form a coiled coil. Positions 752 to 761 (NSTNKKSNSP) are enriched in polar residues. Disordered regions lie at residues 752 to 812 (NSTN…SPRA) and 891 to 964 (GASA…NSGR). The segment covering 776–788 (RAVDPGENSRSKG) has biased composition (basic and acidic residues). The segment covering 794-807 (SEGSPGSSQSGSRH) has biased composition (low complexity). The span at 904-916 (SDIECDTENEEQE) shows a compositional bias: acidic residues. Over residues 955–964 (SFNTDENSGR) the composition is skewed to polar residues.

The protein belongs to the TRIM/RBCC family. As to quaternary structure, associates with the PRC2/EED-EZH2 complex. Post-translationally, auto-ubiquitinated. Ubiquitous. Highly expressed in testis, while it is weakly expressed in other tissues.

It localises to the chromosome. The protein localises to the cytoplasm. The protein resides in the perinuclear region. Its subcellular location is the peroxisome membrane. It catalyses the reaction S-ubiquitinyl-[E2 ubiquitin-conjugating enzyme]-L-cysteine + [acceptor protein]-L-lysine = [E2 ubiquitin-conjugating enzyme]-L-cysteine + N(6)-ubiquitinyl-[acceptor protein]-L-lysine.. It participates in protein modification; protein ubiquitination. Its function is as follows. E3 ubiquitin-protein ligase required to prevent centriole reduplication. Probably acts by ubiquitinating positive regulators of centriole reduplication. Mediates monoubiquitination of 'Lys-119' of histone H2A (H2AK119Ub), a specific tag for epigenetic transcriptional repression: associates with some Polycomb group (PcG) multiprotein PRC2-like complex and mediates repression of target genes. Also acts as a positive regulator of peroxisome import by mediating monoubiquitination of PEX5 at 'Lys-472': monoubiquitination promotes PEX5 stabilitation by preventing its polyubiquitination and degradation by the proteasome. Has anti-HIV activity. The sequence is that of E3 ubiquitin-protein ligase TRIM37 from Homo sapiens (Human).